A 319-amino-acid polypeptide reads, in one-letter code: Probable ABC transporter permease protein MG189 homolog (319 aa).

A run of 6 helical transmembrane segments spans residues 41–61 (VVLC…LVVA), 98–118 (AIWI…FFTV), 134–154 (LFWF…LIGQ), 169–189 (PAII…GFMF), 229–249 (TVSI…LLLL), and 282–302 (NLKM…YFLF). Residues 99 to 302 (IWINSLVTIL…LPMFIVYFLF (204 aa)) enclose the ABC transmembrane type-1 domain.

Belongs to the binding-protein-dependent transport system permease family. MalFG subfamily.

It localises to the cell membrane. Functionally, probably part of a binding-protein-dependent transport system. Probably responsible for the translocation of the substrate across the membrane. The chain is Probable ABC transporter permease protein MG189 homolog from Mycoplasma pneumoniae (strain ATCC 29342 / M129 / Subtype 1) (Mycoplasmoides pneumoniae).